Reading from the N-terminus, the 90-residue chain is UPF0237 protein MMP0657 (90 aa).

In terms of domain architecture, ACT spans 5 to 79; it reads VITVVGVDKP…SEIGVKINVQ (75 aa).

It belongs to the UPF0237 family.

This is UPF0237 protein MMP0657 from Methanococcus maripaludis (strain DSM 14266 / JCM 13030 / NBRC 101832 / S2 / LL).